Here is a 308-residue protein sequence, read N- to C-terminus: Glutamyl-Q tRNA(Asp) synthetase (308 aa).

L-glutamate is bound by residues 19–23 (RFAPS) and Glu-55. Positions 22 to 32 (PSPSGELHFGS) match the 'HIGH' region motif. Zn(2+) contacts are provided by Cys-111, Cys-113, Tyr-125, and Cys-129. L-glutamate-binding residues include Tyr-182 and Arg-200. Positions 238-242 (KLSKQ) match the 'KMSKS' region motif. Lys-241 provides a ligand contact to ATP.

This sequence belongs to the class-I aminoacyl-tRNA synthetase family. GluQ subfamily. Zn(2+) serves as cofactor.

Its function is as follows. Catalyzes the tRNA-independent activation of glutamate in presence of ATP and the subsequent transfer of glutamate onto a tRNA(Asp). Glutamate is transferred on the 2-amino-5-(4,5-dihydroxy-2-cyclopenten-1-yl) moiety of the queuosine in the wobble position of the QUC anticodon. This chain is Glutamyl-Q tRNA(Asp) synthetase, found in Escherichia coli O6:H1 (strain CFT073 / ATCC 700928 / UPEC).